The chain runs to 139 residues: Cystatin-11 (139 aa).

The first 28 residues, 1-28 (MMARLWKTTWFLLAILVALVAFSYQVKR), serve as a signal peptide directing secretion. Intrachain disulfides connect Cys-94–Cys-102 and Cys-115–Cys-135. An N-linked (GlcNAc...) asparagine glycan is attached at Asn-134.

It belongs to the cystatin family.

The protein resides in the secreted. Has antibacterial activity against the Gram-negative bacteria E.coli. May play a role in sperm maturation and fertilization. The sequence is that of Cystatin-11 (Cst11) from Rattus norvegicus (Rat).